We begin with the raw amino-acid sequence, 631 residues long: RNA polymerase sigma factor RpoD (631 aa).

Residues 395–465 (LIKANLRLVV…TRSISDQART (71 aa)) are sigma-70 factor domain-2. The short motif at 419 to 422 (DLVQ) is the Interaction with polymerase core subunit RpoC element. Residues 474–550 (EQINRLNRET…DKAIKNPANH (77 aa)) are sigma-70 factor domain-3. A sigma-70 factor domain-4 region spans residues 563–616 (ILGTLPEREQEVVKMRFGLEDGYSLTLEEVGLHFNVTRERIRQIESKALRRLKN). The H-T-H motif DNA-binding region spans 589–608 (LEEVGLHFNVTRERIRQIES).

Belongs to the sigma-70 factor family. RpoD/SigA subfamily. In terms of assembly, interacts transiently with the RNA polymerase catalytic core.

The protein resides in the cytoplasm. In terms of biological role, sigma factors are initiation factors that promote the attachment of RNA polymerase to specific initiation sites and are then released. This sigma factor is the primary sigma factor during exponential growth. This is RNA polymerase sigma factor RpoD from Borreliella burgdorferi (strain ATCC 35210 / DSM 4680 / CIP 102532 / B31) (Borrelia burgdorferi).